A 194-amino-acid polypeptide reads, in one-letter code: Thymidine kinase (194 aa).

Residues 15 to 22 (GCMFSGKT) and 88 to 91 (DELH) contribute to the ATP site. Glu89 functions as the Proton acceptor in the catalytic mechanism. Positions 148, 151, 186, and 189 each coordinate Zn(2+).

This sequence belongs to the thymidine kinase family. In terms of assembly, homotetramer.

Its subcellular location is the cytoplasm. It carries out the reaction thymidine + ATP = dTMP + ADP + H(+). This is Thymidine kinase from Roseiflexus castenholzii (strain DSM 13941 / HLO8).